The chain runs to 146 residues: Large ribosomal subunit protein uL15 (146 aa).

Over residues 1 to 13 (MKLHELKPAEGSR) the composition is skewed to basic and acidic residues. The disordered stretch occupies residues 1–65 (MKLHELKPAE…PLYRRLPKRG (65 aa)). Gly residues-rich tracts occupy residues 21 to 31 (RGIGSGNGKTA) and 42 to 52 (SGGGVRPGFEG).

The protein belongs to the universal ribosomal protein uL15 family. As to quaternary structure, part of the 50S ribosomal subunit.

Its function is as follows. Binds to the 23S rRNA. The sequence is that of Large ribosomal subunit protein uL15 from Halalkalibacterium halodurans (strain ATCC BAA-125 / DSM 18197 / FERM 7344 / JCM 9153 / C-125) (Bacillus halodurans).